The primary structure comprises 369 residues: Anhydro-N-acetylmuramic acid kinase (369 aa).

Residue 12-19 coordinates ATP; sequence GTSMDGVD.

It belongs to the anhydro-N-acetylmuramic acid kinase family.

It carries out the reaction 1,6-anhydro-N-acetyl-beta-muramate + ATP + H2O = N-acetyl-D-muramate 6-phosphate + ADP + H(+). Its pathway is amino-sugar metabolism; 1,6-anhydro-N-acetylmuramate degradation. It functions in the pathway cell wall biogenesis; peptidoglycan recycling. In terms of biological role, catalyzes the specific phosphorylation of 1,6-anhydro-N-acetylmuramic acid (anhMurNAc) with the simultaneous cleavage of the 1,6-anhydro ring, generating MurNAc-6-P. Is required for the utilization of anhMurNAc either imported from the medium or derived from its own cell wall murein, and thus plays a role in cell wall recycling. This chain is Anhydro-N-acetylmuramic acid kinase, found in Shewanella sp. (strain MR-7).